A 124-amino-acid polypeptide reads, in one-letter code: 14 kDa peptide of ubiquinol-cytochrome c2 oxidoreductase complex (124 aa).

The helical transmembrane segment at 85–102 threads the bilayer; the sequence is LGGFASGALLALALAGIF.

Its subcellular location is the cell inner membrane. Functionally, component of the ubiquinol-cytochrome c reductase complex (complex III or cytochrome b-c1 complex), which is a respiratory chain that generates an electrochemical potential coupled to ATP synthesis. This chain is 14 kDa peptide of ubiquinol-cytochrome c2 oxidoreductase complex, found in Cereibacter sphaeroides (Rhodobacter sphaeroides).